A 338-amino-acid chain; its full sequence is Glyceraldehyde-3-phosphate dehydrogenase (338 aa).

Residues 13–14 (RI), aspartate 35, and arginine 80 contribute to the NAD(+) site. Residues 151-153 (SCT), threonine 182, 211-212 (TG), and arginine 234 contribute to the D-glyceraldehyde 3-phosphate site. The active-site Nucleophile is cysteine 152. Asparagine 317 is a binding site for NAD(+).

The protein belongs to the glyceraldehyde-3-phosphate dehydrogenase family. Homotetramer.

Its subcellular location is the cytoplasm. The enzyme catalyses D-glyceraldehyde 3-phosphate + phosphate + NAD(+) = (2R)-3-phospho-glyceroyl phosphate + NADH + H(+). The protein operates within carbohydrate degradation; glycolysis; pyruvate from D-glyceraldehyde 3-phosphate: step 1/5. This is Glyceraldehyde-3-phosphate dehydrogenase (gpdA) from Aspergillus oryzae (strain ATCC 42149 / RIB 40) (Yellow koji mold).